The primary structure comprises 430 residues: Dihydroorotase (430 aa).

The Zn(2+) site is built by histidine 57 and histidine 59. Substrate contacts are provided by residues 59–61 (HLR) and asparagine 91. Zn(2+) contacts are provided by aspartate 151, histidine 178, and histidine 231. Asparagine 277 provides a ligand contact to substrate. Aspartate 304 contacts Zn(2+). Residue aspartate 304 is part of the active site. Substrate is bound by residues histidine 308 and 322–323 (PG).

Belongs to the metallo-dependent hydrolases superfamily. DHOase family. Class I DHOase subfamily. Zn(2+) is required as a cofactor.

The catalysed reaction is (S)-dihydroorotate + H2O = N-carbamoyl-L-aspartate + H(+). It participates in pyrimidine metabolism; UMP biosynthesis via de novo pathway; (S)-dihydroorotate from bicarbonate: step 3/3. Its function is as follows. Catalyzes the reversible cyclization of carbamoyl aspartate to dihydroorotate. In Mycobacterium bovis (strain ATCC BAA-935 / AF2122/97), this protein is Dihydroorotase.